A 412-amino-acid polypeptide reads, in one-letter code: Flap endonuclease 1-B (412 aa).

Residues 1–105 (MGIKGLTKLL…KELAKRSLKR (105 aa)) are N-domain. Position 34 (D34) interacts with Mg(2+). R71 provides a ligand contact to DNA. Mg(2+)-binding residues include D87, E159, E161, D180, and D182. An I-domain region spans residues 123-254 (LIEKFSKRTV…QRALKLIRQH (132 aa)). E159 lines the DNA pocket. The DNA site is built by G232 and D234. D234 is a binding site for Mg(2+).

The protein belongs to the XPG/RAD2 endonuclease family. FEN1 subfamily. Interacts with PCNA. Three molecules of FEN1 bind to one PCNA trimer with each molecule binding to one PCNA monomer. PCNA stimulates the nuclease activity without altering cleavage specificity. It depends on Mg(2+) as a cofactor. Post-translationally, phosphorylated. Phosphorylation upon DNA damage induces relocalization to the nuclear plasma.

It localises to the nucleus. The protein resides in the nucleolus. It is found in the nucleoplasm. The protein localises to the mitochondrion. Its function is as follows. Structure-specific nuclease with 5'-flap endonuclease and 5'-3' exonuclease activities involved in DNA replication and repair. During DNA replication, cleaves the 5'-overhanging flap structure that is generated by displacement synthesis when DNA polymerase encounters the 5'-end of a downstream Okazaki fragment. It enters the flap from the 5'-end and then tracks to cleave the flap base, leaving a nick for ligation. Also involved in the long patch base excision repair (LP-BER) pathway, by cleaving within the apurinic/apyrimidinic (AP) site-terminated flap. Acts as a genome stabilization factor that prevents flaps from equilibrating into structures that lead to duplications and deletions. Also possesses 5'-3' exonuclease activity on nicked or gapped double-stranded DNA, and exhibits RNase H activity. Also involved in replication and repair of rDNA and in repairing mitochondrial DNA. The polypeptide is Flap endonuclease 1-B (Oryza sativa subsp. indica (Rice)).